The sequence spans 678 residues: RNA helicase NPH-II (678 aa).

Positions 175 to 351 constitute a Helicase ATP-binding domain; the sequence is FESWIHHVPV…EFFTESVFVH (177 aa). ATP is bound at residue 188–195; the sequence is GDTGVGKT. Positions 300-303 match the DEXH box motif; sequence DEVH. The region spanning 371 to 546 is the Helicase C-terminal domain; the sequence is SLNKFMYIEE…VFDLQLPEDL (176 aa).

Belongs to the DEAD box helicase family. DEAH subfamily. As to quaternary structure, monomer.

It localises to the virion. It carries out the reaction ATP + H2O = ADP + phosphate + H(+). Functionally, NTP-dependent helicase that catalyzes unidirectional unwinding of 3'tailed duplex RNAs and plays an important role during transcription of early mRNAs, presumably by preventing R-loop formation behind the elongating RNA polymerase. Might also play a role in the export of newly synthesized mRNA chains out of the core into the cytoplasm. Required for replication and propagation of viral particles. The chain is RNA helicase NPH-II (OPG084) from Oryctolagus cuniculus (Rabbit).